Reading from the N-terminus, the 187-residue chain is UPF0301 protein Sputcn32_2681 (187 aa).

This sequence belongs to the UPF0301 (AlgH) family.

This is UPF0301 protein Sputcn32_2681 from Shewanella putrefaciens (strain CN-32 / ATCC BAA-453).